The following is a 389-amino-acid chain: 26S proteasome regulatory subunit 10B (389 aa).

Lys72 is subject to N6-acetyllysine. 174–181 (GPPGTGKT) provides a ligand contact to ATP. An N6-acetyllysine modification is found at Lys206. The residue at position 244 (Ser244) is a Phosphoserine.

Belongs to the AAA ATPase family. In terms of assembly, component of the 19S proteasome regulatory particle complex. The 26S proteasome consists of a 20S core particle (CP) and two 19S regulatory subunits (RP). The regulatory particle is made of a lid composed of 9 subunits, a base containing 6 ATPases including PSMC6 and few additional components. Interacts with PAAF1.

It is found in the cytoplasm. The protein localises to the nucleus. Component of the 26S proteasome, a multiprotein complex involved in the ATP-dependent degradation of ubiquitinated proteins. This complex plays a key role in the maintenance of protein homeostasis by removing misfolded or damaged proteins, which could impair cellular functions, and by removing proteins whose functions are no longer required. Therefore, the proteasome participates in numerous cellular processes, including cell cycle progression, apoptosis, or DNA damage repair. PSMC6 belongs to the heterohexameric ring of AAA (ATPases associated with diverse cellular activities) proteins that unfolds ubiquitinated target proteins that are concurrently translocated into a proteolytic chamber and degraded into peptides. This Homo sapiens (Human) protein is 26S proteasome regulatory subunit 10B (PSMC6).